The following is a 401-amino-acid chain: L-rhamnonate dehydratase (401 aa).

Positions 29 and 55 each coordinate substrate. Mg(2+)-binding residues include D222, E248, and E276. Catalysis depends on H325, which acts as the Proton acceptor. Position 345 (E345) interacts with substrate.

This sequence belongs to the mandelate racemase/muconate lactonizing enzyme family. RhamD subfamily. As to quaternary structure, homooctamer; tetramer of dimers. It depends on Mg(2+) as a cofactor.

It catalyses the reaction L-rhamnonate = 2-dehydro-3-deoxy-L-rhamnonate + H2O. Its function is as follows. Catalyzes the dehydration of L-rhamnonate to 2-keto-3-deoxy-L-rhamnonate (KDR). This is L-rhamnonate dehydratase from Tolumonas auensis (strain DSM 9187 / NBRC 110442 / TA 4).